The primary structure comprises 189 residues: Apolipoprotein D (189 aa).

A signal peptide spans 1–20; the sequence is MATMLLLLATLAGLFTTTEG. Q21 is subject to Pyrrolidone carboxylic acid. Disulfide bonds link C28–C134 and C61–C185. 2 N-linked (GlcNAc...) asparagine glycosylation sites follow: N65 and N98.

This sequence belongs to the calycin superfamily. Lipocalin family. In terms of assembly, homodimer. In terms of tissue distribution, expressed in liver, kidney, bladder, adrenal, cerebrum, duodenum, testis, lung, spleen, pancreas, heart and skin.

The protein resides in the secreted. In terms of biological role, APOD occurs in the macromolecular complex with lecithin-transport and binding of bilin. Appears to be able to transport a variety of ligands in a number of different contexts. The sequence is that of Apolipoprotein D (Apod) from Rattus norvegicus (Rat).